A 328-amino-acid polypeptide reads, in one-letter code: MSFRREKFIEFGGPDGGNGGNGGSVIFVASSAVNTLLYFRYNQHIRAENGKAGSGKGKFGAAGRNRVVEVPVGTQLYDEDGNTLIADLNNIGQQYTVAAGGRGGIGNAQYKSSTNRAPTYFTYGTLGEEHCVLLKLKIVSDVGIIGMPNAGKSSLLSRCTASKTKVSDYPFTTLEPHLGVAYANGCELVLADIPGLIENASSGAGLGHKFLKHIERCVILLHLVDCSLPDIVSAYELVRQELKLHSQELTGKQEVVILNKCDLLSEGEVREKQKLLESSTKKEVITLSMGDELDSLIVFLHAQVKKAVVTEPSDTSFDPFLYVHYNKK.

The Obg domain maps to 1 to 139 (MSFRREKFIE…HCVLLKLKIV (139 aa)). The OBG-type G domain occupies 140–309 (SDVGIIGMPN…LHAQVKKAVV (170 aa)). GTP contacts are provided by residues 146–153 (GMPNAGKS), 171–175 (FTTLE), 192–195 (DIPG), 259–262 (NKCD), and 290–292 (GDE). The Mg(2+) site is built by Ser-153 and Thr-173.

Belongs to the TRAFAC class OBG-HflX-like GTPase superfamily. OBG GTPase family. In terms of assembly, monomer. It depends on Mg(2+) as a cofactor.

It is found in the cytoplasm. In terms of biological role, an essential GTPase which binds GTP, GDP and possibly (p)ppGpp with moderate affinity, with high nucleotide exchange rates and a fairly low GTP hydrolysis rate. Plays a role in control of the cell cycle, stress response, ribosome biogenesis and in those bacteria that undergo differentiation, in morphogenesis control. The polypeptide is GTPase Obg 2 (Anaplasma marginale (strain Florida)).